The primary structure comprises 179 residues: Probable DNA-directed RNA polymerase subunit delta (179 aa).

The 68-residue stretch at 14–81 (MSLVELAYEI…GDQRWGLRSW (68 aa)) folds into the HTH HARE-type domain. Positions 108 to 179 (VVEEDFDEIE…DDLDDNEEEK (72 aa)) are disordered. A compositionally biased stretch (acidic residues) spans 109–179 (VEEDFDEIEE…DDLDDNEEEK (71 aa)).

This sequence belongs to the RpoE family. In terms of assembly, RNAP is composed of a core of 2 alpha, a beta and a beta' subunits. The core is associated with a delta subunit and one of several sigma factors.

Its function is as follows. Participates in both the initiation and recycling phases of transcription. In the presence of the delta subunit, RNAP displays an increased specificity of transcription, a decreased affinity for nucleic acids, and an increased efficiency of RNA synthesis because of enhanced recycling. The chain is Probable DNA-directed RNA polymerase subunit delta from Bacillus pumilus (strain SAFR-032).